Consider the following 136-residue polypeptide: Single-stranded DNA-binding protein 1 (136 aa).

One can recognise an SSB domain in the interval 4-109 (LNKMQLIGNL…IMAKEMQMLG (106 aa)). The disordered stretch occupies residues 109–136 (GKKQDNNKVGNARHGDALPADEDDYYDF). The span at 127 to 136 (PADEDDYYDF) shows a compositional bias: acidic residues.

In terms of assembly, homotetramer.

The sequence is that of Single-stranded DNA-binding protein 1 (ssb1) from Xylella fastidiosa (strain 9a5c).